A 186-amino-acid chain; its full sequence is ATP synthase subunit delta (186 aa).

Belongs to the ATPase delta chain family. F-type ATPases have 2 components, F(1) - the catalytic core - and F(0) - the membrane proton channel. F(1) has five subunits: alpha(3), beta(3), gamma(1), delta(1), epsilon(1). CF(0) has four main subunits: a(1), b(1), b'(1) and c(10-14). The alpha and beta chains form an alternating ring which encloses part of the gamma chain. F(1) is attached to F(0) by a central stalk formed by the gamma and epsilon chains, while a peripheral stalk is formed by the delta, b and b' chains.

Its subcellular location is the cell inner membrane. Functionally, f(1)F(0) ATP synthase produces ATP from ADP in the presence of a proton or sodium gradient. F-type ATPases consist of two structural domains, F(1) containing the extramembraneous catalytic core and F(0) containing the membrane proton channel, linked together by a central stalk and a peripheral stalk. During catalysis, ATP synthesis in the catalytic domain of F(1) is coupled via a rotary mechanism of the central stalk subunits to proton translocation. This protein is part of the stalk that links CF(0) to CF(1). It either transmits conformational changes from CF(0) to CF(1) or is implicated in proton conduction. The chain is ATP synthase subunit delta from Rhodopseudomonas palustris (strain BisA53).